Here is a 352-residue protein sequence, read N- to C-terminus: tRNA N6-adenosine threonylcarbamoyltransferase (352 aa).

Positions 114, 118, and 135 each coordinate a divalent metal cation. Residues 135 to 139 (YVSGG), Asp-167, Gly-182, Glu-186, and Asn-283 contribute to the substrate site. Residue Asp-311 coordinates a divalent metal cation.

The protein belongs to the KAE1 / TsaD family. As to quaternary structure, component of the EKC/KEOPS complex composed of at least BUD32, CGI121, GON7, KAE1 and PCC1; the whole complex dimerizes. Requires a divalent metal cation as cofactor.

It is found in the cytoplasm. It localises to the nucleus. It carries out the reaction L-threonylcarbamoyladenylate + adenosine(37) in tRNA = N(6)-L-threonylcarbamoyladenosine(37) in tRNA + AMP + H(+). Functionally, component of the EKC/KEOPS complex that is required for the formation of a threonylcarbamoyl group on adenosine at position 37 (t(6)A37) in tRNAs that read codons beginning with adenine. The complex is probably involved in the transfer of the threonylcarbamoyl moiety of threonylcarbamoyl-AMP (TC-AMP) to the N6 group of A37. KAE1 likely plays a direct catalytic role in this reaction, but requires other protein(s) of the complex to fulfill this activity. The EKC/KEOPS complex also promotes both telomere uncapping and telomere elongation. The complex is required for efficient recruitment of transcriptional coactivators. The protein is tRNA N6-adenosine threonylcarbamoyltransferase of Phaeosphaeria nodorum (strain SN15 / ATCC MYA-4574 / FGSC 10173) (Glume blotch fungus).